We begin with the raw amino-acid sequence, 573 residues long: Poly(ribitol-phosphate) beta-N-acetylglucosaminyltransferase TarS (573 aa).

Residues P9, D41, N68, R76, 92 to 94 (DSD), R127, and E178 each bind UDP-N-acetyl-alpha-D-glucosamine. Residue D94 coordinates Mn(2+). The Proton acceptor role is filled by D179. Residues R207 and 211–213 (HMS) each bind UDP-N-acetyl-alpha-D-glucosamine.

The protein belongs to the glycosyltransferase 2 family. In terms of assembly, homotrimer. It depends on Mn(2+) as a cofactor.

The enzyme catalyses 4-O-[(D-ribitylphospho)(n)-di{(2R)-glycerylphospho}]-N-acetyl-beta-D-mannosaminyl-(1-&gt;4)-N-acetyl-alpha-D-glucosaminyl di-trans,octa-cis-undecaprenyl diphosphate + n UDP-N-acetyl-alpha-D-glucosamine = 4-O-([2-N-acetyl-beta-D-glucosaminyl-1-D-ribitylphospho](n)-di{[2R]-1-glycerylphospho})-N-acetyl-beta-D-mannosaminyl-(1-&gt;4)-N-acetyl-alpha-D-glucosaminyl di-trans,octa-cis-undecaprenyl diphosphate + n UDP + n H(+). Its pathway is cell wall biogenesis; poly(ribitol phosphate) teichoic acid biosynthesis. In terms of biological role, attaches beta-O-GlcNAc (beta-O-N-acetyl-D-glucosamine) residues to the C4 position of poly(RboP)-wall teichoic acids (WTAs). Prefers UDP-GlcNAc as a donor substrate and is specific for poly(ribitol phosphate) WTAs. Can also use UDP-Glc and UDP-GalNAc, but not UDP-galactose or UDP-glucuronic acid. Mediates beta-lactam resistance in methicillin resistant Staphylococcus aureus (MRSA) strains. This chain is Poly(ribitol-phosphate) beta-N-acetylglucosaminyltransferase TarS, found in Staphylococcus aureus (strain MW2).